The primary structure comprises 310 residues: Protein FIP2 (310 aa).

The disordered stretch occupies residues 1–58 (MGFAPVTPAAVETYDPDVDHDDESNGLDGFRVRSKRSGKFSGGYSDSPREVGDGYGVR). The span at 14–25 (YDPDVDHDDESN) shows a compositional bias: acidic residues. 2 positions are modified to phosphoserine: Ser-77 and Ser-105. 3 disordered regions span residues 115–135 (ATRL…GSGG), 152–171 (FKPK…LDYD), and 177–221 (DRAE…GSSS). The span at 208 to 221 (PRNTGASNGYGSSS) shows a compositional bias: polar residues.

Interacts with FRI. Interacts with WAV3.

This chain is Protein FIP2, found in Arabidopsis thaliana (Mouse-ear cress).